The following is a 153-amino-acid chain: Interleukin-4 (153 aa).

The signal sequence occupies residues 1-24 (MGLTSQLLPPLFFLLACAGNFAHG). 3 disulfides stabilise this stretch: cysteine 27-cysteine 151, cysteine 48-cysteine 89, and cysteine 70-cysteine 123. Residue asparagine 62 is glycosylated (N-linked (GlcNAc...) asparagine).

This sequence belongs to the IL-4/IL-13 family.

It is found in the secreted. Participates in at least several B-cell activation processes as well as of other cell types. It is a costimulator of DNA-synthesis. It induces the expression of class II MHC molecules on resting B-cells. It enhances both secretion and cell surface expression of IgE and IgG1. It also regulates the expression of the low affinity Fc receptor for IgE (CD23) on both lymphocytes and monocytes. Positively regulates IL31RA expression in macrophages. Stimulates autophagy in dendritic cells by interfering with mTORC1 signaling and through the induction of RUFY4. This is Interleukin-4 (IL4) from Papio anubis (Olive baboon).